The chain runs to 112 residues: Small ribosomal subunit protein bS6 (112 aa).

This sequence belongs to the bacterial ribosomal protein bS6 family.

Its function is as follows. Binds together with bS18 to 16S ribosomal RNA. The protein is Small ribosomal subunit protein bS6 of Chlamydia abortus (strain DSM 27085 / S26/3) (Chlamydophila abortus).